The following is a 232-amino-acid chain: Orotidine 5'-phosphate decarboxylase (232 aa).

Substrate is bound by residues aspartate 14, lysine 36, 63–72 (DLKFHDIPNT), threonine 122, arginine 183, glutamine 192, glycine 212, and arginine 213. The Proton donor role is filled by lysine 65.

It belongs to the OMP decarboxylase family. Type 1 subfamily. In terms of assembly, homodimer.

The enzyme catalyses orotidine 5'-phosphate + H(+) = UMP + CO2. It participates in pyrimidine metabolism; UMP biosynthesis via de novo pathway; UMP from orotate: step 2/2. Functionally, catalyzes the decarboxylation of orotidine 5'-monophosphate (OMP) to uridine 5'-monophosphate (UMP). The polypeptide is Orotidine 5'-phosphate decarboxylase (Psychrobacter arcticus (strain DSM 17307 / VKM B-2377 / 273-4)).